A 199-amino-acid chain; its full sequence is Ubiquitin-conjugating enzyme E2-22 kDa (199 aa).

Residues M4 to G154 enclose the UBC core domain. Residue C92 is the Glycyl thioester intermediate of the active site. A UBA domain is found at D161 to S199.

Belongs to the ubiquitin-conjugating enzyme family. As to quaternary structure, interacts with Rpn10. As to expression, during gastrulation, expression is highest in the invaginating posterior midgut primordium (PMG), high expression is also observed in the cephalic furrow and ventral ectodermal neurogenic region. In stage 10-11 embryos, expression is high in the pole cells present in the pocket formed by the PMG. During germ band retraction, expression appears to reinitiate in many tissues, especially the gut and nervous system. After dorsal closure, expression is detectable at low levels throughout the embryo.

It carries out the reaction S-ubiquitinyl-[E1 ubiquitin-activating enzyme]-L-cysteine + [E2 ubiquitin-conjugating enzyme]-L-cysteine = [E1 ubiquitin-activating enzyme]-L-cysteine + S-ubiquitinyl-[E2 ubiquitin-conjugating enzyme]-L-cysteine.. The protein operates within protein modification; protein ubiquitination. Its function is as follows. Catalyzes the covalent attachment of ubiquitin to other proteins. The protein is Ubiquitin-conjugating enzyme E2-22 kDa of Drosophila melanogaster (Fruit fly).